The chain runs to 436 residues: Adenylosuccinate synthetase (436 aa).

GTP is bound by residues 21–27 and 49–51; these read GDEGKGK and GHT. Aspartate 22 functions as the Proton acceptor in the catalytic mechanism. Residues aspartate 22 and glycine 49 each contribute to the Mg(2+) site. Residues 22 to 25, 47 to 50, threonine 135, arginine 149, glutamine 230, threonine 245, and arginine 309 each bind IMP; these read DEGK and NAGH. The active-site Proton donor is histidine 50. Residue 305–311 participates in substrate binding; sequence TTTGRPR. GTP is bound by residues arginine 311, 337-339, and 423-425; these read KVD and SSG.

It belongs to the adenylosuccinate synthetase family. Homodimer. The cofactor is Mg(2+).

Its subcellular location is the cytoplasm. The catalysed reaction is IMP + L-aspartate + GTP = N(6)-(1,2-dicarboxyethyl)-AMP + GDP + phosphate + 2 H(+). The protein operates within purine metabolism; AMP biosynthesis via de novo pathway; AMP from IMP: step 1/2. Its function is as follows. Plays an important role in the de novo pathway of purine nucleotide biosynthesis. Catalyzes the first committed step in the biosynthesis of AMP from IMP. The protein is Adenylosuccinate synthetase of Thermoplasma volcanium (strain ATCC 51530 / DSM 4299 / JCM 9571 / NBRC 15438 / GSS1).